The chain runs to 684 residues: Rabphilin-3A (684 aa).

A disordered region spans residues 1–21 (MTDTVVNRWMYPGDGPLQSND). Residues 40–157 (QRKQEELTDE…KRSGAWFFKG (118 aa)) enclose the RabBD domain. An FYVE-type zinc finger spans residues 88–145 (GDGVNRCILCGEQLGMLGSACVVCEDCKKNVCTKCGVETSNNRPHPVWLCKICLEQRE). Residues C94, C97, C111, C114, C119, C122, C137, and C140 each contribute to the Zn(2+) site. Residues 162 to 377 (VLPQPMPIKK…EEEEANSYDS (216 aa)) form a disordered region. Residues 199–208 (ARGDMEDRRA) are compositionally biased toward basic and acidic residues. Residue R223 is modified to Omega-N-methylarginine. A compositionally biased stretch (basic and acidic residues) spans 243–252 (RDSEGWDHGH). S274 is modified (phosphoserine). The segment covering 283–299 (ASMPSPAPPQPVQPGPP) has biased composition (pro residues). Residues 301 to 310 (GSRAAPGPGR) show a composition bias toward low complexity. In terms of domain architecture, C2 1 spans 382–504 (TLGALEFSLL…KANQRKNFNI (123 aa)). Positions 412, 413, 419, 474, 475, 476, 482, 529, 571, 577, 631, 632, 633, and 639 each coordinate Ca(2+). One can recognise a C2 2 domain in the interval 540–673 (ERGKILVSLM…NKDKKIERWH (134 aa)). Phosphoserine is present on residues S682 and S683.

Interacts with RAB3B, RAB3C, RAB3D, RAB8A, RAB27A and RAB27B. Interacts with RAB3A; this interaction recruits RPH3A to synaptic vesicules. Interacts (via C2B domain) with SNAP25. Interacts with deubiquitinating enzyme CAND1; this interaction results in the deubiquitination of RPH3A. Interacts with GRIN2A and DLG4; this ternary complex regulates NMDA receptor composition at postsynaptic membranes. Interacts with SNCA. The cofactor is Ca(2+). Post-translationally, ubiquitinated. Deubiquitinated by CAND1 to prevent its degradation. In terms of tissue distribution, specifically expressed in brain.

The protein localises to the cytoplasmic vesicle. It is found in the secretory vesicle. Its subcellular location is the synaptic vesicle membrane. It localises to the cell projection. The protein resides in the dendritic spine. The protein localises to the postsynaptic cell membrane. It is found in the membrane. Its function is as follows. Plays an essential role in docking and fusion steps of regulated exocytosis. At the presynaptic level, RPH3A is recruited by RAB3A to the synaptic vesicle membrane in a GTP-dependent manner where it modulates synaptic vesicle trafficking and calcium-triggered neurotransmitter release. In the post-synaptic compartment, forms a ternary complex with GRIN2A and DLG4 and regulates NMDA receptor stability. Also plays a role in the exocytosis of arginine vasopressin hormone. This chain is Rabphilin-3A (Rph3a), found in Rattus norvegicus (Rat).